A 115-amino-acid chain; its full sequence is Large ribosomal subunit protein bL20c (115 aa).

It belongs to the bacterial ribosomal protein bL20 family.

The protein resides in the plastid. Its subcellular location is the chloroplast. In terms of biological role, binds directly to 23S ribosomal RNA and is necessary for the in vitro assembly process of the 50S ribosomal subunit. It is not involved in the protein synthesizing functions of that subunit. This is Large ribosomal subunit protein bL20c (rpl20) from Mesostigma viride (Green alga).